The primary structure comprises 218 residues: Pyridoxine/pyridoxamine 5'-phosphate oxidase (218 aa).

Substrate contacts are provided by residues 14-17 and K72; that span reads RREY. Residues 67–72, 82–83, R88, K89, and Q111 contribute to the FMN site; these read RIVLLK and YT. Substrate-binding residues include Y129, R133, and S137. Residues 146–147 and W191 contribute to the FMN site; that span reads QS. 197–199 contacts substrate; it reads RLH. R201 is a binding site for FMN.

The protein belongs to the pyridoxamine 5'-phosphate oxidase family. As to quaternary structure, homodimer. Requires FMN as cofactor.

The catalysed reaction is pyridoxamine 5'-phosphate + O2 + H2O = pyridoxal 5'-phosphate + H2O2 + NH4(+). It catalyses the reaction pyridoxine 5'-phosphate + O2 = pyridoxal 5'-phosphate + H2O2. It functions in the pathway cofactor metabolism; pyridoxal 5'-phosphate salvage; pyridoxal 5'-phosphate from pyridoxamine 5'-phosphate: step 1/1. Its pathway is cofactor metabolism; pyridoxal 5'-phosphate salvage; pyridoxal 5'-phosphate from pyridoxine 5'-phosphate: step 1/1. Functionally, catalyzes the oxidation of either pyridoxine 5'-phosphate (PNP) or pyridoxamine 5'-phosphate (PMP) into pyridoxal 5'-phosphate (PLP). The chain is Pyridoxine/pyridoxamine 5'-phosphate oxidase from Enterobacter sp. (strain 638).